Consider the following 171-residue polypeptide: MARINSNSGTAVLSRGAAVPAARRPASGTSASKISKLSSTGPPNAPWSKSLTIFKTFISVYLGQAACLAASSRISSRCIVCIRSTLFLTLFALNVAQEFVFGATPAPTVKTDLNIRDFSKSSCSALKYRIYVSSFVSVLNIILYVLLFLASVVYIRYLCHQSITTETVKDY.

Residues 1–132 (MARINSNSGT…CSALKYRIYV (132 aa)) are Virion surface-facing. The chain crosses the membrane as a helical span at residues 133 to 153 (SSFVSVLNIILYVLLFLASVV). Residues 154-171 (YIRYLCHQSITTETVKDY) are Intravirion-facing.

Belongs to the herpesviridae glycoprotein N family. As to quaternary structure, interacts (via N-terminus) with gM (via N-terminus). The gM-gN heterodimer forms the gCII complex.

The protein resides in the virion membrane. It is found in the host membrane. Its subcellular location is the host Golgi apparatus. It localises to the host trans-Golgi network. Functionally, envelope glycoprotein necessary for proper maturation of gM and modulation of its membrane fusion activity. Also plays a critical role in virion morphogenesis. The chain is Envelope glycoprotein N from Elephas maximus (Indian elephant).